Reading from the N-terminus, the 686-residue chain is ATP-dependent zinc metalloprotease FTSH 6, chloroplastic (686 aa).

Polar residues predominate over residues methionine 1 to arginine 14. Positions methionine 1–serine 52 are disordered. A chloroplast-targeting transit peptide spans methionine 1 to arginine 75. A compositionally biased stretch (low complexity) spans threonine 39–serine 52. The chain crosses the membrane as a helical span at residues valine 164–leucine 184. Glycine 261–threonine 268 contributes to the ATP binding site. Position 483 (histidine 483) interacts with Zn(2+). Residue glutamate 484 is part of the active site. Zn(2+) is bound by residues histidine 487 and aspartate 562.

It in the N-terminal section; belongs to the AAA ATPase family. This sequence in the C-terminal section; belongs to the peptidase M41 family. Requires Zn(2+) as cofactor.

The protein localises to the plastid. It is found in the chloroplast thylakoid membrane. Functionally, probable ATP-dependent zinc metallopeptidase. This is ATP-dependent zinc metalloprotease FTSH 6, chloroplastic (FTSH6) from Oryza sativa subsp. japonica (Rice).